The chain runs to 419 residues: MAEPVGKRGRWSGGSGAGRGGRGGWGGRGRRPRAQRSPSRGTLDVVSVDLVTDSDEEILEVATARGAADEVEVEPPEPPGPVASRDNSNSDSEGEDRRPAGPPREPVRRRRRLVLDPGEAPLVPVYSGKVKSSLRLIPDDLSLLKLYPPGDEEEAELADSSGLYHEGSPSPGSPWKTKLRTKDKEEKKKTEFLDLDNSPLSPPSPRTKSRTHTRALKKLSEVNKRLQDLRSCLSPKPPQGQEQQGQEDEVVLVEGPTLPETPRLFPLKIRCRADLVRLPLRMSEPLQSVVDHMATHLGVSPSRILLLFGETELSPTATPRTLKLGVADIIDCVVLTSSPEATETSQQLQLRVQGKEKHQTLEVSLSRDSPLKTLMSHYEEAMGLSGRKLSFFFDGTKLSGRELPADLGMESGDLIEVWG.

Disordered regions lie at residues 1-131 (MAEP…GKVK) and 151-215 (DEEE…HTRA). Over residues 11-27 (WSGGSGAGRGGRGGWGG) the composition is skewed to gly residues. Positions 35–51 (QRSPSRGTLDVVSVDLV) are enriched in low complexity. Serine 54, serine 84, serine 88, serine 90, serine 92, and serine 127 each carry phosphoserine. Residues lysine 129 and lysine 131 each participate in a glycyl lysine isopeptide (Lys-Gly) (interchain with G-Cter in SUMO2) cross-link. Positions 180–192 (RTKDKEEKKKTEF) are enriched in basic and acidic residues. Phosphoserine is present on residues serine 198, serine 201, serine 204, serine 220, and serine 314. Residues 209–231 (SRTHTRALKKLSEVNKRLQDLRS) are a coiled coil. Residues threonine 316 and threonine 318 each carry the phosphothreonine modification. Residues 348–419 (LQLRVQGKEK…ESGDLIEVWG (72 aa)) form the Ubiquitin-like domain. Phosphoserine occurs at positions 369 and 390.

As to quaternary structure, interacts with NFATC2, TRAF1, TRAF2 and PRMT1. Interacts with UBE2I/UBC9. Methylation at the N-terminus by PRMT1 modulates interaction with the NFAT complex and results in augmented cytokine production.

It is found in the nucleus. The protein resides in the cytoplasm. Its function is as follows. In T-helper 2 (Th2) cells, regulates the magnitude of NFAT-driven transcription of a specific subset of cytokine genes, including IL3, IL4, IL5 and IL13, but not IL2. Recruits PRMT1 to the IL4 promoter; this leads to enhancement of histone H4 'Arg-3'-methylation and facilitates subsequent histone acetylation at the IL4 locus, thus promotes robust cytokine expression. Down-regulates formation of poly-SUMO chains by UBE2I/UBC9. This is NFATC2-interacting protein (NFATC2IP) from Homo sapiens (Human).